Reading from the N-terminus, the 761-residue chain is Signal transducer and transcription activator (761 aa).

Residues 594–658 (WKAGCIMGFI…APWTARDFQV (65 aa)) enclose the SH2 domain. Tyr-711 bears the Phosphotyrosine; by JAK mark.

This sequence belongs to the transcription factor STAT family. As to quaternary structure, forms a homodimer or a heterodimer with a related family member. In terms of processing, tyrosine phosphorylated by hopscotch. Phosphorylation is required for DNA-binding activity and dimerization.

It localises to the cytoplasm. It is found in the nucleus. Functionally, might play a role in signal transduction and activation of transcription. Plays an important role in the segmental pattern formation in the early embryo by activating specific stripes of pair rule gene expression in early development as part of the Janus kinase-STAT pathway. Might play a role in male germline stem cell maintenance. The polypeptide is Signal transducer and transcription activator (Stat92E) (Drosophila melanogaster (Fruit fly)).